The following is a 262-amino-acid chain: Small ribosomal subunit protein uS2 (262 aa).

Belongs to the universal ribosomal protein uS2 family.

The chain is Small ribosomal subunit protein uS2 from Azobacteroides pseudotrichonymphae genomovar. CFP2.